The following is a 122-amino-acid chain: Large ribosomal subunit protein uL14 (122 aa).

It belongs to the universal ribosomal protein uL14 family. Part of the 50S ribosomal subunit. Forms a cluster with proteins L3 and L19. In the 70S ribosome, L14 and L19 interact and together make contacts with the 16S rRNA in bridges B5 and B8.

In terms of biological role, binds to 23S rRNA. Forms part of two intersubunit bridges in the 70S ribosome. The protein is Large ribosomal subunit protein uL14 of Mycobacterium ulcerans (strain Agy99).